The following is a 401-amino-acid chain: Elongation factor Tu (401 aa).

One can recognise a tr-type G domain in the interval 10-211 (KPHLNIGTIG…AVDTYVPNPT (202 aa)). The G1 stretch occupies residues 19–26 (GHVDHGKT). 19-26 (GHVDHGKT) lines the GTP pocket. Residue Thr26 participates in Mg(2+) binding. The interval 62 to 66 (GITIA) is G2. Residues 83-86 (DCPG) are G3. GTP-binding positions include 83–87 (DCPGH) and 138–141 (NKAD). The tract at residues 138–141 (NKAD) is G4. The tract at residues 179 to 181 (SAL) is G5.

This sequence belongs to the TRAFAC class translation factor GTPase superfamily. Classic translation factor GTPase family. EF-Tu/EF-1A subfamily. As to quaternary structure, monomer.

It localises to the cytoplasm. The catalysed reaction is GTP + H2O = GDP + phosphate + H(+). GTP hydrolase that promotes the GTP-dependent binding of aminoacyl-tRNA to the A-site of ribosomes during protein biosynthesis. The chain is Elongation factor Tu from Leptospira biflexa serovar Patoc (strain Patoc 1 / Ames).